The primary structure comprises 320 residues: 1-aminocyclopropane-1-carboxylate oxidase 2 (320 aa).

A coiled-coil region spans residues 111–143 (DEYRTAMKDFGKRLENLAEDLLDLLCENLGLEK). Residues 156 to 256 (PTFGTKVSNY…RMSVASFYNP (101 aa)) form the Fe2OG dioxygenase domain. The Fe cation site is built by His180, Asp182, and His237. Arg247 serves as a coordination point for 2-oxoglutarate.

The protein belongs to the iron/ascorbate-dependent oxidoreductase family. It depends on Fe(2+) as a cofactor. Cu(2+) serves as cofactor. In terms of tissue distribution, expressed in vegetative tissues. Constitutively expressed in leaves and blades. In ethylene exposed etiolated seedlings, localized in cells at the outer side of the exaggerated hook in an ethylene-dependent manner and following an ethylene sensitive pattern. Also detected in the root tip when treated by ethylene.

The catalysed reaction is 1-aminocyclopropane-1-carboxylate + L-ascorbate + O2 = ethene + L-dehydroascorbate + hydrogen cyanide + CO2 + 2 H2O. Its pathway is alkene biosynthesis; ethylene biosynthesis via S-adenosyl-L-methionine; ethylene from S-adenosyl-L-methionine: step 2/2. Enzyme involved in the ethylene biosynthesis. Required to mediate the 1-aminocyclopropane-1-carboxylic acid (ACC)-mediated reversion of the ABA-induced inhibition of seed germination via endosperm rupture. May promote stem elongation by maximizing the extensibility cells, possibly by activating ethylene biosynthesis, in response to very-long-chain fatty acids (VLCFAs C20:0 to C30:0). This Arabidopsis thaliana (Mouse-ear cress) protein is 1-aminocyclopropane-1-carboxylate oxidase 2 (ACO2).